We begin with the raw amino-acid sequence, 360 residues long: Peptide chain release factor 1 (360 aa).

An N5-methylglutamine modification is found at glutamine 235. Positions 285-305 (KRQEAEASERRNLLGSGDRSD) are disordered.

The protein belongs to the prokaryotic/mitochondrial release factor family. Methylated by PrmC. Methylation increases the termination efficiency of RF1.

It is found in the cytoplasm. In terms of biological role, peptide chain release factor 1 directs the termination of translation in response to the peptide chain termination codons UAG and UAA. The polypeptide is Peptide chain release factor 1 (Proteus mirabilis (strain HI4320)).